Consider the following 553-residue polypeptide: Cytokine-like nuclear factor N-PAC (553 aa).

The 59-residue stretch at 8–66 (LGDLVWGKLGRYPPWPGKIVNPPKDLKKPRGKKCFFVKFFGTEDHAWIKVEQLKPYHAH) folds into the PWWP domain. Composition is skewed to basic and acidic residues over residues 92–145 (RAKG…EGKK) and 162–182 (RAQE…KDLT). The disordered stretch occupies residues 92 to 188 (RAKGKDQTSS…KDLTIPESST (97 aa)). Residue serine 130 is modified to Phosphoserine. Residue lysine 135 forms a Glycyl lysine isopeptide (Lys-Gly) (interchain with G-Cter in SUMO2) linkage. At serine 167 the chain carries Phosphoserine. The a.T hook DNA-binding region spans 168-180 (PRKRGRPPKDEKD). Residues lysine 176, lysine 179, lysine 201, and lysine 211 each participate in a glycyl lysine isopeptide (Lys-Gly) (interchain with G-Cter in SUMO2) cross-link. An interaction with histone H3 region spans residues 214 to 217 (DPHF). The interval 216 to 225 (HFHHFLLSQT) is interaction with KDM1B. Glycyl lysine isopeptide (Lys-Gly) (interchain with G-Cter in SUMO2) cross-links involve residues lysine 227, lysine 237, lysine 240, and lysine 269. The tract at residues 261–553 (GSITPTDKKI…MSAVYRAYIH (293 aa)) is dehydrogenase domain. Residue 271–285 (GFLGLGLMGSGIVSN) participates in NAD(+) binding. Lysine 302 is covalently cross-linked (Glycyl lysine isopeptide (Lys-Gly) (interchain with G-Cter in SUMO2)). Residues threonine 362 and lysine 505 each coordinate NAD(+). Position 540 is a phosphoserine (serine 540).

This sequence belongs to the HIBADH-related family. NP60 subfamily. In terms of assembly, homotetramere. Interacts with MAPK14. Interacts with KDM1B at nucleosomes; this interaction stimulates H3K4me1 and H3K4me2 demethylation. Binds to mononucleosomes. Interacts with GATA4; the interaction is required for a synergistic activation of GATA4 target genes transcription.

Its subcellular location is the nucleus. The protein localises to the chromosome. Cytokine-like nuclear factor with chromatin gene reader activity involved in chromatin modification and regulation of gene expression. Acts as a nucleosome-destabilizing factor that is recruited to genes during transcriptional activation. Recognizes and binds histone H3 without a preference for specific epigenetic markers and also binds DNA. Interacts with KDM1B and promotes its histone demethylase activity by facilitating the capture of H3 tails, they form a multifunctional enzyme complex that modifies transcribed chromatin and facilitates Pol II transcription through nucleosomes. Stimulates the acetylation of 'Lys-56' of nucleosomal histone H3 (H3K56ac) by EP300. With GATA4, co-binds a defined set of heart development genes and coregulates their expression during cardiomyocyte differentiation. Regulates p38 MAP kinase activity by mediating stress activation of MAPK14/p38alpha and specifically regulating MAPK14 signaling. Indirectly promotes phosphorylation of MAPK14 and activation of ATF2. The phosphorylation of MAPK14 requires upstream activity of MAP2K4 and MAP2K6. The sequence is that of Cytokine-like nuclear factor N-PAC (GLYR1) from Pongo abelii (Sumatran orangutan).